We begin with the raw amino-acid sequence, 119 residues long: Large ribosomal subunit protein uL18 (119 aa).

This sequence belongs to the universal ribosomal protein uL18 family. In terms of assembly, part of the 50S ribosomal subunit; part of the 5S rRNA/L5/L18/L25 subcomplex. Contacts the 5S and 23S rRNAs.

Functionally, this is one of the proteins that bind and probably mediate the attachment of the 5S RNA into the large ribosomal subunit, where it forms part of the central protuberance. This is Large ribosomal subunit protein uL18 from Ruegeria pomeroyi (strain ATCC 700808 / DSM 15171 / DSS-3) (Silicibacter pomeroyi).